Here is a 166-residue protein sequence, read N- to C-terminus: NADPH-dependent 7-cyano-7-deazaguanine reductase (166 aa).

Residue cysteine 57 is the Thioimide intermediate of the active site. Aspartate 64 (proton donor) is an active-site residue. Residues 79-81 (VES) and 98-99 (HE) contribute to the substrate site.

It belongs to the GTP cyclohydrolase I family. QueF type 1 subfamily.

It is found in the cytoplasm. It catalyses the reaction 7-aminomethyl-7-carbaguanine + 2 NADP(+) = 7-cyano-7-deazaguanine + 2 NADPH + 3 H(+). Its pathway is tRNA modification; tRNA-queuosine biosynthesis. In terms of biological role, catalyzes the NADPH-dependent reduction of 7-cyano-7-deazaguanine (preQ0) to 7-aminomethyl-7-deazaguanine (preQ1). The chain is NADPH-dependent 7-cyano-7-deazaguanine reductase from Alkaliphilus metalliredigens (strain QYMF).